The sequence spans 391 residues: Protein Wnt-2b (391 aa).

5 cysteine pairs are disulfide-bonded: cysteine 107/cysteine 118, cysteine 158/cysteine 166, cysteine 168/cysteine 188, cysteine 237/cysteine 251, and cysteine 239/cysteine 246. Asparagine 117 carries N-linked (GlcNAc...) asparagine glycosylation. Serine 243 carries the O-palmitoleoyl serine; by PORCN lipid modification. The N-linked (GlcNAc...) asparagine glycan is linked to asparagine 283. Disulfide bonds link cysteine 309–cysteine 340, cysteine 325–cysteine 335, cysteine 339–cysteine 379, cysteine 355–cysteine 370, cysteine 357–cysteine 367, and cysteine 362–cysteine 363.

It belongs to the Wnt family. As to quaternary structure, forms a soluble 1:1 complex with AFM; this prevents oligomerization and is required for prolonged biological activity. The complex with AFM may represent the physiological form in body fluids. Interacts with FZD4 and FZD5. In terms of processing, palmitoleoylation is required for efficient binding to frizzled receptors. Depalmitoleoylation leads to Wnt signaling pathway inhibition. As to expression, isoform 1 is expressed in adult heart, brain, placenta, lung, prostate, testis, ovary, small intestine and colon. In the adult brain, it is mainly found in the caudate nucleus, subthalamic nucleus and thalamus. Also detected in fetal brain, lung and kidney. Isoform 2 is expressed in fetal brain, fetal lung, fetal kidney, caudate nucleus, testis and cancer cell lines.

The protein localises to the secreted. It localises to the extracellular space. It is found in the extracellular matrix. Ligand for members of the frizzled family of seven transmembrane receptors. Functions in the canonical Wnt/beta-catenin signaling pathway. Plays a redundant role in embryonic lung development. The chain is Protein Wnt-2b (WNT2B) from Homo sapiens (Human).